The following is a 509-amino-acid chain: Putative ATP-dependent RNA helicase QP509L (509 aa).

A Helicase ATP-binding domain is found at 110–262; the sequence is KKLLSPYGRF…KIILHHLGQP (153 aa). Position 123–130 (123–130) interacts with ATP; the sequence is LNTGLGKT. The DEAH box signature appears at 215 to 218; that stretch reads DEAH.

This sequence belongs to the DEAD box helicase family. DEAH subfamily.

The enzyme catalyses ATP + H2O = ADP + phosphate + H(+). The sequence is that of Putative ATP-dependent RNA helicase QP509L from Ornithodoros (relapsing fever ticks).